The chain runs to 215 residues: Large ribosomal subunit protein uL4 (215 aa).

Residues 43-97 (RRQGTHSTKTRAEVSGGGKKPWRQKGTGRARAGSTRSPIWVGGGKTHTPKPRDYS) form a disordered region.

It belongs to the universal ribosomal protein uL4 family. Part of the 50S ribosomal subunit.

Functionally, one of the primary rRNA binding proteins, this protein initially binds near the 5'-end of the 23S rRNA. It is important during the early stages of 50S assembly. It makes multiple contacts with different domains of the 23S rRNA in the assembled 50S subunit and ribosome. Forms part of the polypeptide exit tunnel. This chain is Large ribosomal subunit protein uL4, found in Brachyspira hyodysenteriae (strain ATCC 49526 / WA1).